We begin with the raw amino-acid sequence, 416 residues long: MSAEIICVGTELLLGDILNGNAQYLAQQLAQLGIPHYHQTVVGDNPDRIKQVIEIAISRANILIFTGGLGPTPDDLTCETIADFFGSPLVESPEIIEDITQKFAQRGRVMTPSNRKQALIPQGADILPNPTGTAPGIIWEPRPDMTIFTFPGVPSEMHRMWQETAVPFLKNQGWGQEIIYSRSLKFWGIGESALAEKVTAYLNLPNPTVAPYAGKGEVRLRVSAKAPSEVAAEALIAPVEKQIKDIAGLDFYGVNHDSLASVVGELLRSSGETLSVAESCTGGLLGQMLTEISGSSDYFWGGVISYDNSVKAGLLGVNPEDLDKLGAVSDTVAEQMAIGVKTRLSTTWALSITGIAGPNGGTETKPVGLVYIGLAGPGDEVTSFKYNFGTMRDRSFIRHLSACTALDLLRRRLLTR.

This sequence belongs to the CinA family.

In Trichormus variabilis (strain ATCC 29413 / PCC 7937) (Anabaena variabilis), this protein is CinA-like protein.